The sequence spans 366 residues: Histidinol-phosphate aminotransferase (366 aa).

An N6-(pyridoxal phosphate)lysine modification is found at Lys228.

Belongs to the class-II pyridoxal-phosphate-dependent aminotransferase family. Histidinol-phosphate aminotransferase subfamily. As to quaternary structure, homodimer. Pyridoxal 5'-phosphate serves as cofactor.

The enzyme catalyses L-histidinol phosphate + 2-oxoglutarate = 3-(imidazol-4-yl)-2-oxopropyl phosphate + L-glutamate. It participates in amino-acid biosynthesis; L-histidine biosynthesis; L-histidine from 5-phospho-alpha-D-ribose 1-diphosphate: step 7/9. The polypeptide is Histidinol-phosphate aminotransferase (Campylobacter fetus subsp. fetus (strain 82-40)).